A 500-amino-acid chain; its full sequence is Glutamate--tRNA ligase (500 aa).

The 'HIGH' region motif lies at 13-23; the sequence is PSPTGTPHVGM. A 'KMSKS' region motif is present at residues 258–262; sequence KLSKR. Lysine 261 provides a ligand contact to ATP.

Belongs to the class-I aminoacyl-tRNA synthetase family. Glutamate--tRNA ligase type 1 subfamily. In terms of assembly, monomer.

It localises to the cytoplasm. It catalyses the reaction tRNA(Glu) + L-glutamate + ATP = L-glutamyl-tRNA(Glu) + AMP + diphosphate. Its function is as follows. Catalyzes the attachment of glutamate to tRNA(Glu) in a two-step reaction: glutamate is first activated by ATP to form Glu-AMP and then transferred to the acceptor end of tRNA(Glu). This chain is Glutamate--tRNA ligase, found in Corynebacterium jeikeium (strain K411).